Consider the following 172-residue polypeptide: Trypsin inhibitor DE-3 (172 aa).

2 disulfide bridges follow: cysteine 39–cysteine 83 and cysteine 132–cysteine 139.

Belongs to the protease inhibitor I3 (leguminous Kunitz-type inhibitor) family.

Its function is as follows. Inhibition of trypsin. The chain is Trypsin inhibitor DE-3 from Erythrina latissima (Broad-leaved coral tree).